Here is a 346-residue protein sequence, read N- to C-terminus: Holliday junction branch migration complex subunit RuvB (346 aa).

A large ATPase domain (RuvB-L) region spans residues 1–183; it reads MTEQRIIASS…FGIVQRLEFY (183 aa). ATP contacts are provided by residues Ile-22, Arg-23, Gly-64, Lys-67, Thr-68, Thr-69, 130 to 132, Arg-173, Tyr-183, and Arg-220; that span reads EDF. Thr-68 lines the Mg(2+) pocket. Residues 184 to 254 form a small ATPAse domain (RuvB-S) region; it reads SPQELTRIVI…VAQAAMQMLK (71 aa). The tract at residues 257-346 is head domain (RuvB-H); that stretch reads PEGFDELDRR…PGIGEPGDLF (90 aa). Arg-293, Arg-312, and Arg-317 together coordinate DNA.

This sequence belongs to the RuvB family. In terms of assembly, homohexamer. Forms an RuvA(8)-RuvB(12)-Holliday junction (HJ) complex. HJ DNA is sandwiched between 2 RuvA tetramers; dsDNA enters through RuvA and exits via RuvB. An RuvB hexamer assembles on each DNA strand where it exits the tetramer. Each RuvB hexamer is contacted by two RuvA subunits (via domain III) on 2 adjacent RuvB subunits; this complex drives branch migration. In the full resolvosome a probable DNA-RuvA(4)-RuvB(12)-RuvC(2) complex forms which resolves the HJ.

It localises to the cytoplasm. It catalyses the reaction ATP + H2O = ADP + phosphate + H(+). Functionally, the RuvA-RuvB-RuvC complex processes Holliday junction (HJ) DNA during genetic recombination and DNA repair, while the RuvA-RuvB complex plays an important role in the rescue of blocked DNA replication forks via replication fork reversal (RFR). RuvA specifically binds to HJ cruciform DNA, conferring on it an open structure. The RuvB hexamer acts as an ATP-dependent pump, pulling dsDNA into and through the RuvAB complex. RuvB forms 2 homohexamers on either side of HJ DNA bound by 1 or 2 RuvA tetramers; 4 subunits per hexamer contact DNA at a time. Coordinated motions by a converter formed by DNA-disengaged RuvB subunits stimulates ATP hydrolysis and nucleotide exchange. Immobilization of the converter enables RuvB to convert the ATP-contained energy into a lever motion, pulling 2 nucleotides of DNA out of the RuvA tetramer per ATP hydrolyzed, thus driving DNA branch migration. The RuvB motors rotate together with the DNA substrate, which together with the progressing nucleotide cycle form the mechanistic basis for DNA recombination by continuous HJ branch migration. Branch migration allows RuvC to scan DNA until it finds its consensus sequence, where it cleaves and resolves cruciform DNA. The sequence is that of Holliday junction branch migration complex subunit RuvB from Xanthomonas axonopodis pv. citri (strain 306).